The following is a 310-amino-acid chain: Carbamate kinase-like protein YqeA (310 aa).

Belongs to the carbamate kinase family.

The chain is Carbamate kinase-like protein YqeA (yqeA) from Escherichia coli (strain K12).